The following is a 624-amino-acid chain: Actin-related protein 8 (624 aa).

Met1 carries the post-translational modification N-acetylmethionine. A compositionally biased stretch (basic and acidic residues) spans 1–25 (MTQAEKGDAENGKEKGGEKEKEQRG). The segment at 1–29 (MTQAEKGDAENGKEKGGEKEKEQRGVKRP) is disordered. Ser55 and Thr56 together coordinate ATP. Ser132 carries the post-translational modification Phosphoserine. Residue 283-286 (DVGD) participates in ATP binding. Ser412 bears the Phosphoserine mark. The tract at residues 430–460 (SKQEQSAKATADRKSASKPIGFEGDLRGQSS) is disordered.

It belongs to the actin family. ARP8 subfamily. In terms of assembly, component of the chromatin remodeling INO80 complex; specifically part of a complex module associated with the DBINO domain of INO80. Exists as monomers and dimers, but the dimer is most probably the biologically relevant form required for stable interactions with histones that exploits the twofold symmetry of the nucleosome core.

Its subcellular location is the nucleus. The protein localises to the chromosome. Its function is as follows. Plays an important role in the functional organization of mitotic chromosomes. Exhibits low basal ATPase activity, and unable to polymerize. Functionally, proposed core component of the chromatin remodeling INO80 complex which is involved in transcriptional regulation, DNA replication and probably DNA repair. Required for the recruitment of INO80 (and probably the INO80 complex) to sites of DNA damage Strongly prefer nucleosomes and H3-H4 tetramers over H2A-H2B dimers, suggesting it may act as a nucleosome recognition module within the complex. The polypeptide is Actin-related protein 8 (ACTR8) (Ailuropoda melanoleuca (Giant panda)).